We begin with the raw amino-acid sequence, 135 residues long: Large ribosomal subunit protein uL16c (135 aa).

The segment at Met1 to Lys20 is disordered.

It belongs to the universal ribosomal protein uL16 family. As to quaternary structure, part of the 50S ribosomal subunit.

The protein localises to the plastid. Its subcellular location is the chloroplast. This chain is Large ribosomal subunit protein uL16c, found in Landoltia punctata (Dotted duckmeat).